The following is an 87-amino-acid chain: Acyl carrier protein TtuC (87 aa).

One can recognise a Carrier domain in the interval 11–87 (ITAEDVQQWL…HALSQFIAAK (77 aa)). Serine 48 carries the O-(pantetheine 4'-phosphoryl)serine modification.

Pantetheine 4'-phosphate is required as a cofactor.

Its function is as follows. Carrier protein likely involved in the biosynthesis of a polyyne metabolite. Accepts as substrate the activated form of decanoic acid from TtuA. In Teredinibacter turnerae (strain ATCC 39867 / T7901), this protein is Acyl carrier protein TtuC.